A 296-amino-acid polypeptide reads, in one-letter code: MLNNMSNNTNNITSVLTESLPYIKKFQGKTIVIKYGGNAMVDEALKSSFARDIVLMKLVGMNPIVVHGGGPQIGKTLKKIGKQSQFIDGMRVTDSETMDVVEMVLGGLVNKEIVNLIHQHGGHSIGLTGKDGSLISAKKLKHDIEPTSEIIDLGHVGEVDKIDISVINLLLKGDFIPVIAPIGVGKDGFSYNINADLVASAIAQALNAEKLILLTNASGLLDANGELLTRLDDNIIDGLIKDGTIHSGMLPKINCALSAVKNGVKSTHIIDGRVAHAVLLEVFTNSGVGTLITCNE.

Residues 69–70, Arg-91, and Asn-192 each bind substrate; that span reads GG.

Belongs to the acetylglutamate kinase family. ArgB subfamily.

It is found in the cytoplasm. The enzyme catalyses N-acetyl-L-glutamate + ATP = N-acetyl-L-glutamyl 5-phosphate + ADP. The protein operates within amino-acid biosynthesis; L-arginine biosynthesis; N(2)-acetyl-L-ornithine from L-glutamate: step 2/4. In terms of biological role, catalyzes the ATP-dependent phosphorylation of N-acetyl-L-glutamate. In Ruthia magnifica subsp. Calyptogena magnifica, this protein is Acetylglutamate kinase.